The chain runs to 313 residues: Phosphoenolpyruvate phosphomutase (313 aa).

The active-site Nucleophile is the Asp69.

The protein belongs to the isocitrate lyase/PEP mutase superfamily. PEP mutase family.

The catalysed reaction is phosphoenolpyruvate + H(+) = 3-phosphonopyruvate. The protein operates within secondary metabolite biosynthesis; bialaphos biosynthesis. Functionally, formation of a carbon-phosphorus bond by converting phosphoenolpyruvate (PEP) to phosphonopyruvate (P-Pyr). In Streptomyces hygroscopicus, this protein is Phosphoenolpyruvate phosphomutase (bcpB).